We begin with the raw amino-acid sequence, 159 residues long: uncharacterized protein (159 aa).

2 helical membrane-spanning segments follow: residues 59–79 (IGALAAMLAVLSFALGCALVY) and 91–113 (VFSVLSGLLYGGGAVLWGLRRVC).

The protein resides in the cell membrane. This is an uncharacterized protein from Treponema pallidum (strain Nichols).